An 84-amino-acid polypeptide reads, in one-letter code: DNA-directed RNA polymerase subunit Rpo5 (84 aa).

Belongs to the archaeal Rpo5/eukaryotic RPB5 RNA polymerase subunit family. Part of the RNA polymerase complex.

The protein localises to the cytoplasm. The enzyme catalyses RNA(n) + a ribonucleoside 5'-triphosphate = RNA(n+1) + diphosphate. Functionally, DNA-dependent RNA polymerase (RNAP) catalyzes the transcription of DNA into RNA using the four ribonucleoside triphosphates as substrates. The polypeptide is DNA-directed RNA polymerase subunit Rpo5 (Saccharolobus islandicus (strain Y.N.15.51 / Yellowstone #2) (Sulfolobus islandicus)).